We begin with the raw amino-acid sequence, 106 residues long: UPF0145 protein CLH_2273 (106 aa).

Belongs to the UPF0145 family.

The polypeptide is UPF0145 protein CLH_2273 (Clostridium botulinum (strain Alaska E43 / Type E3)).